Reading from the N-terminus, the 83-residue chain is Transmembrane protein EP84R (83 aa).

Helical transmembrane passes span 31–51 and 59–79; these read IIGV…IIIL and AGSI…FLIY.

It belongs to the asfivirus EP84R family.

The protein localises to the virion membrane. The protein is Transmembrane protein EP84R of Ornithodoros (relapsing fever ticks).